A 414-amino-acid polypeptide reads, in one-letter code: Signal recognition particle receptor FtsY (414 aa).

GTP-binding positions include 216–223 (GVNGVGKT), 298–302 (DTAGR), and 362–365 (TKLD).

It belongs to the GTP-binding SRP family. FtsY subfamily. Part of the signal recognition particle protein translocation system, which is composed of SRP and FtsY. SRP is a ribonucleoprotein composed of Ffh and a 4.5S RNA molecule.

It is found in the cell inner membrane. It localises to the cytoplasm. The catalysed reaction is GTP + H2O = GDP + phosphate + H(+). Functionally, involved in targeting and insertion of nascent membrane proteins into the cytoplasmic membrane. Acts as a receptor for the complex formed by the signal recognition particle (SRP) and the ribosome-nascent chain (RNC). Interaction with SRP-RNC leads to the transfer of the RNC complex to the Sec translocase for insertion into the membrane, the hydrolysis of GTP by both Ffh and FtsY, and the dissociation of the SRP-FtsY complex into the individual components. This chain is Signal recognition particle receptor FtsY, found in Haemophilus influenzae (strain ATCC 51907 / DSM 11121 / KW20 / Rd).